The following is an 818-amino-acid chain: Beta-glucosidase (818 aa).

Asp222 is a catalytic residue. The PA14 domain occupies 386-538 (VFSGEMTVEY…GDAGIAEAVE (153 aa)).

This sequence belongs to the glycosyl hydrolase 3 family.

The protein resides in the cytoplasm. It carries out the reaction Hydrolysis of terminal, non-reducing beta-D-glucosyl residues with release of beta-D-glucose.. Its function is as follows. Involved in modifying a vir-inducing plant signal molecule. Hydrolyzes coniferin but not cellobiose. This chain is Beta-glucosidase (cbg-1), found in Rhizobium radiobacter (Agrobacterium tumefaciens).